The following is a 92-amino-acid chain: Small ribosomal subunit protein uS19c (92 aa).

It belongs to the universal ribosomal protein uS19 family.

The protein localises to the plastid. It is found in the chloroplast. Functionally, protein S19 forms a complex with S13 that binds strongly to the 16S ribosomal RNA. The chain is Small ribosomal subunit protein uS19c from Cycas taitungensis (Prince sago).